The chain runs to 61 residues: ERMES regulator 1 (61 aa).

Residues 1–20 (MLPNLRRIFASFRTEEEERS) lie on the Mitochondrial intermembrane side of the membrane. Residues 21 to 43 (YSRKAFFHLIGYITCSVLFSWLV) traverse the membrane as a helical segment. Residues 44–61 (RKKVISSPVVSSPIHALS) lie on the Cytoplasmic side of the membrane.

This sequence belongs to the EMR1 family. In terms of assembly, interacts with the ER-mitochondria encounter structure (ERMES) complex. Interacts with mdm12. Interacts with mdm34.

The protein resides in the mitochondrion outer membrane. Functionally, mediates the formation of endoplasmic reticulum (ER)-mitochondria encounter structure (ERMES) foci, thereby contributing to the formation of ER-mitochondrial contact sites. The sequence is that of ERMES regulator 1 from Schizosaccharomyces pombe (strain 972 / ATCC 24843) (Fission yeast).